Reading from the N-terminus, the 198-residue chain is uncharacterized protein (198 aa).

A run of 4 helical transmembrane segments spans residues 20-40 (VIVG…GLWA), 70-90 (FFVA…TASV), 107-127 (LAIG…LLVW), and 164-184 (VAAT…VLAA).

It to M.tuberculosis Rv1591.

Its subcellular location is the cell membrane. This is an uncharacterized protein from Mycobacterium leprae (strain TN).